The chain runs to 109 residues: Iron-sulfur cluster assembly protein CyaY (109 aa).

It belongs to the frataxin family.

Functionally, involved in iron-sulfur (Fe-S) cluster assembly. May act as a regulator of Fe-S biogenesis. This is Iron-sulfur cluster assembly protein CyaY from Shewanella baltica (strain OS155 / ATCC BAA-1091).